A 502-amino-acid polypeptide reads, in one-letter code: ATP synthase subunit alpha (502 aa).

A disordered region spans residues 115–135 (VDGLGPINTTNTRPIESPAPG). An ATP-binding site is contributed by 169–176 (GDRQTGKT).

It belongs to the ATPase alpha/beta chains family. As to quaternary structure, F-type ATPases have 2 components, CF(1) - the catalytic core - and CF(0) - the membrane proton channel. CF(1) has five subunits: alpha(3), beta(3), gamma(1), delta(1), epsilon(1). CF(0) has three main subunits: a(1), b(2) and c(9-12). The alpha and beta chains form an alternating ring which encloses part of the gamma chain. CF(1) is attached to CF(0) by a central stalk formed by the gamma and epsilon chains, while a peripheral stalk is formed by the delta and b chains.

It localises to the cell membrane. It catalyses the reaction ATP + H2O + 4 H(+)(in) = ADP + phosphate + 5 H(+)(out). In terms of biological role, produces ATP from ADP in the presence of a proton gradient across the membrane. The alpha chain is a regulatory subunit. The protein is ATP synthase subunit alpha of Bacillus cereus (strain B4264).